Consider the following 154-residue polypeptide: Aminoalkylphosphonate N-acetyltransferase (154 aa).

The 141-residue stretch at 14–154 (CELRHATTED…QSHFRFTKAL (141 aa)) folds into the N-acetyltransferase domain.

In terms of assembly, homodimer. It depends on a divalent metal cation as a cofactor.

It carries out the reaction aminomethylphosphonate + acetyl-CoA = 2-N-acetamidomethylphosphonate + CoA. The catalysed reaction is (S)-1-aminoethylphosphonate + acetyl-CoA = [(1S)-1-acetamidoethyl]phosphonate + CoA. Its function is as follows. Aminoalkylphosphonate N-acetyltransferase which is able to acetylate a range of aminoalkylphosphonic acids, including (S)-1-aminoethylphosphonate ((S)-1AEP) and 2-aminoethylphosphonate, using acetyl-CoA as acetyl donor. Its physiological role in S.typhimurium is unclear. However, by acetylating (S)-1AEP, PhnO would protect against the deleterious effects of (S)-1AEP, a structural analog of D-alanine that has antibacterial properties. The chain is Aminoalkylphosphonate N-acetyltransferase from Salmonella typhimurium (strain LT2 / SGSC1412 / ATCC 700720).